Reading from the N-terminus, the 318-residue chain is Melanoma-associated antigen 8 (318 aa).

The interval 1 to 103 (MLLGQKSQRY…GPSTSPDPAH (103 aa)) is disordered. Positions 112-311 (LDEKVAELVR…ISYPSLHEEA (200 aa)) constitute an MAGE domain.

In terms of tissue distribution, expressed in many tumors of several types, such as melanoma, head and neck squamous cell carcinoma, lung carcinoma and breast carcinoma, but not in normal tissues except for testis and placenta.

In terms of biological role, not known, though may play a role in embryonal development and tumor transformation or aspects of tumor progression. The chain is Melanoma-associated antigen 8 (MAGEA8) from Homo sapiens (Human).